The sequence spans 887 residues: ABC transporter A family member 10 (887 aa).

7 consecutive transmembrane segments (helical) span residues 38–58 (GIQY…VITL), 198–218 (YLYV…LLVT), 245–265 (IIIV…VVLY), 277–297 (VMLF…GIIL), 309–329 (AISS…QFYL), 335–355 (SSWL…EFLY), and 376–396 (ISFL…WYIT). Low complexity predominate over residues 443–469 (NNCNNNNTSPSSSSSSQSSPLNKPLLS). A disordered region spans residues 443 to 474 (NNCNNNNTSPSSSSSSQSSPLNKPLLSGDSDD). In terms of domain architecture, ABC transporter spans 481 to 728 (IRLVNLKKTY…FNLGYILTIV (248 aa)). 519–526 (GQNGSGKT) contributes to the ATP binding site. Residues 774–797 (NNNNNENNSNNSDGSSSSSDSSSS) are compositionally biased toward low complexity. A disordered region spans residues 774–799 (NNNNNENNSNNSDGSSSSSDSSSSKD).

This sequence belongs to the ABC transporter superfamily. ABCA family.

It localises to the membrane. The polypeptide is ABC transporter A family member 10 (abcA10) (Dictyostelium discoideum (Social amoeba)).